Consider the following 73-residue polypeptide: Translation initiation factor IF-1 (73 aa).

Positions Met1–Lys73 constitute an S1-like domain.

This sequence belongs to the IF-1 family. In terms of assembly, component of the 30S ribosomal translation pre-initiation complex which assembles on the 30S ribosome in the order IF-2 and IF-3, IF-1 and N-formylmethionyl-tRNA(fMet); mRNA recruitment can occur at any time during PIC assembly.

The protein localises to the cytoplasm. In terms of biological role, one of the essential components for the initiation of protein synthesis. Stabilizes the binding of IF-2 and IF-3 on the 30S subunit to which N-formylmethionyl-tRNA(fMet) subsequently binds. Helps modulate mRNA selection, yielding the 30S pre-initiation complex (PIC). Upon addition of the 50S ribosomal subunit IF-1, IF-2 and IF-3 are released leaving the mature 70S translation initiation complex. This Kineococcus radiotolerans (strain ATCC BAA-149 / DSM 14245 / SRS30216) protein is Translation initiation factor IF-1.